We begin with the raw amino-acid sequence, 159 residues long: UPF0756 membrane protein PTH_1668 (159 aa).

4 helical membrane passes run 15 to 37 (ILIT…SSCI), 61 to 81 (LGLV…KLTI), 117 to 137 (PEII…LRGT), and 138 to 158 (PCGP…ASLF).

This sequence belongs to the UPF0756 family.

The protein localises to the cell membrane. In Pelotomaculum thermopropionicum (strain DSM 13744 / JCM 10971 / SI), this protein is UPF0756 membrane protein PTH_1668.